Reading from the N-terminus, the 362-residue chain is Golgi-resident adenosine 3',5'-bisphosphate 3'-phosphatase (362 aa).

Met1 is subject to N-acetylmethionine. Topologically, residues 1-12 (MAPMGIRLSPLG) are cytoplasmic. The helical transmembrane segment at 13-33 (VAVFCLLGLGVLYHLYSGFLA) threads the bilayer. At 34-362 (GRFSLFGLGG…LPDLEKTGHK (329 aa)) the chain is on the lumenal side. A disordered region spans residues 88–109 (RESNVLHEKSKGKTREGADDKM). The active-site Proton acceptor is the Asp113. Mg(2+) is bound by residues Glu136, Asp177, Leu179, and Asp180. Thr182 (proton acceptor) is an active-site residue. Ser245 and His248 together coordinate AMP. The N-linked (GlcNAc...) asparagine glycan is linked to Asn262. AMP contacts are provided by Gly271 and Lys275. Asp303 serves as a coordination point for Mg(2+).

Belongs to the inositol monophosphatase superfamily. Requires Mg(2+) as cofactor. In terms of processing, contains N-linked glycan resistant to endoglycosydase H.

The protein localises to the golgi apparatus. The protein resides in the trans-Golgi network membrane. The enzyme catalyses adenosine 3',5'-bisphosphate + H2O = AMP + phosphate. Its pathway is sulfur metabolism. Strongly inhibited by lithium. Its function is as follows. Exhibits 3'-nucleotidase activity toward adenosine 3',5'-bisphosphate (PAP), namely hydrolyzes adenosine 3',5'-bisphosphate into adenosine 5'-monophosphate (AMP) and a phosphate. May play a role in the formation of skeletal elements derived through endochondral ossification, possibly by clearing adenosine 3',5'-bisphosphate produced by Golgi sulfotransferases during glycosaminoglycan sulfation. Has no activity toward 3'-phosphoadenosine 5'-phosphosulfate (PAPS) or inositol phosphate (IP) substrates including I(1)P, I(1,4)P2, I(1,3,4)P3, I(1,4,5)P3 and I(1,3,4,5)P4. This Bos taurus (Bovine) protein is Golgi-resident adenosine 3',5'-bisphosphate 3'-phosphatase (BPNT2).